Reading from the N-terminus, the 579-residue chain is Zinc finger protein 248 (579 aa).

In terms of domain architecture, KRAB spans 8 to 79 (VSFKDVCVDF…EKGFPSQCHP (72 aa)). The C2H2-type 1; degenerate zinc finger occupies 240–264 (TVCKYNECGRTFIESLKLNISQRPH). Lysine 341 participates in a covalent cross-link: Glycyl lysine isopeptide (Lys-Gly) (interchain with G-Cter in SUMO2). 7 consecutive C2H2-type zinc fingers follow at residues 380–402 (FECG…QRTH), 408–430 (YECT…QRTH), 436–458 (YECK…QRTH), 464–486 (YECN…QRTH), 492–514 (FICN…QRTH), 520–543 (YKCN…RTHT), and 548–570 (YECN…QRIH).

Belongs to the krueppel C2H2-type zinc-finger protein family.

Its subcellular location is the nucleus. In terms of biological role, may be involved in transcriptional regulation. In Homo sapiens (Human), this protein is Zinc finger protein 248 (ZNF248).